Reading from the N-terminus, the 192-residue chain is Ion-translocating oxidoreductase complex subunit A (192 aa).

6 helical membrane-spanning segments follow: residues 5–25 (ILLLIGTVLVNNFVLVKFLGL), 39–59 (IGMGLATTFVLTMASVCAYLV), 72–92 (LRTMSFILVIAVVVQFTEMVV), 102–122 (LLGIFLPLITTNCAVLGVALL), 134–154 (IIYGFGAAVGFSLVLILFASM), and 171–191 (SIAMITAGLMSLAFMGFTGLV).

It belongs to the NqrDE/RnfAE family. The complex is composed of six subunits: RnfA, RnfB, RnfC, RnfD, RnfE and RnfG.

The protein resides in the cell inner membrane. Part of a membrane-bound complex that couples electron transfer with translocation of ions across the membrane. In Vibrio vulnificus (strain CMCP6), this protein is Ion-translocating oxidoreductase complex subunit A.